Here is a 401-residue protein sequence, read N- to C-terminus: Argininosuccinate synthase (401 aa).

ATP is bound by residues 10-18 (AYSGGVDTS) and alanine 38. Tyrosine 89 contacts L-citrulline. Position 119 (glycine 119) interacts with ATP. L-aspartate contacts are provided by threonine 121, asparagine 125, and aspartate 126. Asparagine 125 is an L-citrulline binding site. Positions 129, 177, 186, 262, and 274 each coordinate L-citrulline.

It belongs to the argininosuccinate synthase family. Type 1 subfamily. In terms of assembly, homotetramer.

It localises to the cytoplasm. It carries out the reaction L-citrulline + L-aspartate + ATP = 2-(N(omega)-L-arginino)succinate + AMP + diphosphate + H(+). Its pathway is amino-acid biosynthesis; L-arginine biosynthesis; L-arginine from L-ornithine and carbamoyl phosphate: step 2/3. The chain is Argininosuccinate synthase from Prochlorococcus marinus (strain MIT 9313).